Here is a 369-residue protein sequence, read N- to C-terminus: MEFEVKKTFGKARLGVMKLHHGAVETPVFMPVGTNANVKLLTPRDLEEAGAEIILSNTFHLMLKPGVEIIKLHRGLHNFMGWKRPILTDSGGFQVFSLPKIRIDDEGVVFRSPIDGSKVFLNPEISMEVQIALGSDICMVFDHCPVPDADYEEVKEATERTYRWALRSKKAFKTENQALFGIVQGGIYPDLRRESALQLTSIGFDGYAIGGLSIGEERSLTLEMTEVTVEFLPEDKPRYFMGGGSPELILELVDRGVDMFDSVFPTRIARHGTALTWNGKLNLKASYNKRSLEPVDERCGCYTCKNFTRSYIHHLFDRGEVLGQILLTIHNINFMISLMKEVRRSIESGTFKELKSKVVEVYSSGGVNV.

D89 acts as the Proton acceptor in catalysis. Residues 89–93, D142, Q184, and G211 each bind substrate; that span reads DSGGF. An RNA binding region spans residues 242-248; that stretch reads GGGSPEL. The active-site Nucleophile is the D261. The RNA binding; important for wobble base 34 recognition stretch occupies residues 266–270; that stretch reads TRIAR. Zn(2+) is bound by residues C299, C301, C304, and H330.

Belongs to the queuine tRNA-ribosyltransferase family. As to quaternary structure, homodimer. Within each dimer, one monomer is responsible for RNA recognition and catalysis, while the other monomer binds to the replacement base PreQ1. The cofactor is Zn(2+).

The catalysed reaction is 7-aminomethyl-7-carbaguanine + guanosine(34) in tRNA = 7-aminomethyl-7-carbaguanosine(34) in tRNA + guanine. Its pathway is tRNA modification; tRNA-queuosine biosynthesis. In terms of biological role, catalyzes the base-exchange of a guanine (G) residue with the queuine precursor 7-aminomethyl-7-deazaguanine (PreQ1) at position 34 (anticodon wobble position) in tRNAs with GU(N) anticodons (tRNA-Asp, -Asn, -His and -Tyr). Catalysis occurs through a double-displacement mechanism. The nucleophile active site attacks the C1' of nucleotide 34 to detach the guanine base from the RNA, forming a covalent enzyme-RNA intermediate. The proton acceptor active site deprotonates the incoming PreQ1, allowing a nucleophilic attack on the C1' of the ribose to form the product. After dissociation, two additional enzymatic reactions on the tRNA convert PreQ1 to queuine (Q), resulting in the hypermodified nucleoside queuosine (7-(((4,5-cis-dihydroxy-2-cyclopenten-1-yl)amino)methyl)-7-deazaguanosine). The polypeptide is Queuine tRNA-ribosyltransferase (Thermotoga sp. (strain RQ2)).